Here is a 190-residue protein sequence, read N- to C-terminus: Ribose 1,5-bisphosphate phosphokinase PhnN (190 aa).

ATP is bound at residue 11 to 18 (GPSGSGKD).

The protein belongs to the ribose 1,5-bisphosphokinase family.

The enzyme catalyses alpha-D-ribose 1,5-bisphosphate + ATP = 5-phospho-alpha-D-ribose 1-diphosphate + ADP. The protein operates within metabolic intermediate biosynthesis; 5-phospho-alpha-D-ribose 1-diphosphate biosynthesis; 5-phospho-alpha-D-ribose 1-diphosphate from D-ribose 5-phosphate (route II): step 3/3. Its function is as follows. Catalyzes the phosphorylation of ribose 1,5-bisphosphate to 5-phospho-D-ribosyl alpha-1-diphosphate (PRPP). In Thiobacillus denitrificans (strain ATCC 25259 / T1), this protein is Ribose 1,5-bisphosphate phosphokinase PhnN.